An 880-amino-acid polypeptide reads, in one-letter code: Leucine--tRNA ligase (880 aa).

The 'HIGH' region signature appears at 46–56 (PYPSGALHMGH). Residues 638-642 (KMSKS) carry the 'KMSKS' region motif. An ATP-binding site is contributed by Lys641.

This sequence belongs to the class-I aminoacyl-tRNA synthetase family.

The protein resides in the cytoplasm. It catalyses the reaction tRNA(Leu) + L-leucine + ATP = L-leucyl-tRNA(Leu) + AMP + diphosphate. This is Leucine--tRNA ligase from Stenotrophomonas maltophilia (strain R551-3).